A 383-amino-acid polypeptide reads, in one-letter code: tRNA-specific 2-thiouridylase MnmA (383 aa).

ATP-binding positions include 30–37 (GMSGGVDS) and M56. The interval 116 to 118 (NPD) is interaction with target base in tRNA. The active-site Nucleophile is C121. Cysteines 121 and 218 form a disulfide. G146 lines the ATP pocket. An interaction with tRNA region spans residues 168–170 (KDQ). C218 functions as the Cysteine persulfide intermediate in the catalytic mechanism. The segment at 330–331 (RY) is interaction with tRNA.

It belongs to the MnmA/TRMU family.

It localises to the cytoplasm. The catalysed reaction is S-sulfanyl-L-cysteinyl-[protein] + uridine(34) in tRNA + AH2 + ATP = 2-thiouridine(34) in tRNA + L-cysteinyl-[protein] + A + AMP + diphosphate + H(+). Functionally, catalyzes the 2-thiolation of uridine at the wobble position (U34) of tRNA, leading to the formation of s(2)U34. This chain is tRNA-specific 2-thiouridylase MnmA, found in Haemophilus influenzae (strain 86-028NP).